A 113-amino-acid chain; its full sequence is Pancreatic progenitor cell differentiation and proliferation factor A (113 aa).

Belongs to the PPDPF family.

In terms of biological role, probable regulator of exocrine pancreas development. The protein is Pancreatic progenitor cell differentiation and proliferation factor A (ppdpf-a) of Xenopus laevis (African clawed frog).